Consider the following 216-residue polypeptide: Cytidylate kinase (216 aa).

7–15 contacts ATP; sequence GPSGTGKST.

This sequence belongs to the cytidylate kinase family. Type 1 subfamily.

The protein localises to the cytoplasm. The enzyme catalyses CMP + ATP = CDP + ADP. It carries out the reaction dCMP + ATP = dCDP + ADP. The sequence is that of Cytidylate kinase from Chlamydia trachomatis serovar D (strain ATCC VR-885 / DSM 19411 / UW-3/Cx).